Reading from the N-terminus, the 141-residue chain is Small ribosomal subunit protein bS18c (141 aa).

Disordered stretches follow at residues 14-55 and 120-141; these read EFIA…IKPG and IKRR…RPKK. The span at 24 to 34 shows a compositional bias: pro residues; the sequence is PKAPLQPPLPP. Residues 35–51 show a composition bias toward basic residues; the sequence is SKRKGKPPKSPRRRSSR.

It belongs to the bacterial ribosomal protein bS18 family. As to quaternary structure, part of the 30S ribosomal subunit.

It localises to the plastid. The protein localises to the chloroplast. The protein is Small ribosomal subunit protein bS18c of Pelargonium hortorum (Common geranium).